Reading from the N-terminus, the 188-residue chain is Gamma-glutamylcyclotransferase (188 aa).

19-22 lines the substrate pocket; sequence YFAY. Glu-98 acts as the Proton acceptor in catalysis. A Phosphoserine modification is found at Ser-173.

This sequence belongs to the gamma-glutamylcyclotransferase family. Homodimer.

It catalyses the reaction an alpha-(gamma-L-glutamyl)-L-amino acid = 5-oxo-L-proline + an L-alpha-amino acid. Catalyzes the formation of 5-oxoproline from gamma-glutamyl dipeptides and may play a significant role in glutathione homeostasis. Induces release of cytochrome c from mitochondria with resultant induction of apoptosis. The chain is Gamma-glutamylcyclotransferase (GGCT) from Bos taurus (Bovine).